The chain runs to 387 residues: DNA primase small subunit PriS (387 aa).

Catalysis depends on residues D98, D100, and D289.

The protein belongs to the eukaryotic-type primase small subunit family. As to quaternary structure, heterodimer of a small subunit (PriS) and a large subunit (PriL). Requires Mg(2+) as cofactor. It depends on Mn(2+) as a cofactor.

Functionally, catalytic subunit of DNA primase, an RNA polymerase that catalyzes the synthesis of short RNA molecules used as primers for DNA polymerase during DNA replication. The small subunit contains the primase catalytic core and has DNA synthesis activity on its own. Binding to the large subunit stabilizes and modulates the activity, increasing the rate of DNA synthesis while decreasing the length of the DNA fragments, and conferring RNA synthesis capability. The DNA polymerase activity may enable DNA primase to also catalyze primer extension after primer synthesis. May also play a role in DNA repair. This Halorubrum lacusprofundi (strain ATCC 49239 / DSM 5036 / JCM 8891 / ACAM 34) protein is DNA primase small subunit PriS.